Reading from the N-terminus, the 346-residue chain is Dihydroorotase (346 aa).

Histidine 17 and histidine 19 together coordinate Zn(2+). Substrate-binding positions include 19-21 and asparagine 45; that span reads HVR. 3 residues coordinate Zn(2+): lysine 102, histidine 139, and histidine 177. An N6-carboxylysine modification is found at lysine 102. Residue histidine 139 participates in substrate binding. A substrate-binding site is contributed by leucine 222. Aspartate 250 contributes to the Zn(2+) binding site. Residue aspartate 250 is part of the active site. Residues histidine 254 and alanine 266 each coordinate substrate.

The protein belongs to the metallo-dependent hydrolases superfamily. DHOase family. Class II DHOase subfamily. As to quaternary structure, homodimer. It depends on Zn(2+) as a cofactor.

The catalysed reaction is (S)-dihydroorotate + H2O = N-carbamoyl-L-aspartate + H(+). It functions in the pathway pyrimidine metabolism; UMP biosynthesis via de novo pathway; (S)-dihydroorotate from bicarbonate: step 3/3. Functionally, catalyzes the reversible cyclization of carbamoyl aspartate to dihydroorotate. This Delftia acidovorans (strain DSM 14801 / SPH-1) protein is Dihydroorotase.